The primary structure comprises 677 residues: Heat shock transcription factor (677 aa).

Disordered regions lie at residues 1 to 56 (MGHN…DDSN) and 115 to 164 (STSS…SQQP). Composition is skewed to polar residues over residues 115 to 131 (STSS…TNAT) and 143 to 164 (QPSS…SQQP). The DNA-binding element occupies 193–297 (ARPAFVNKLW…EYLLENIVRQ (105 aa)). Positions 320–373 (ELETVKYNQLAIAEDLKRITKDNEMLWKENMMARERHQSQQQVLEKLLRFLSSV) are involved in trimerization. Composition is skewed to low complexity over residues 400-416 (NHMS…INPN) and 457-501 (RSMS…QGQQ). Disordered regions lie at residues 400-444 (NHMS…VPLQ), 457-541 (RSMS…NQYS), and 606-677 (KLNP…RRAA). The segment at 466-677 (NLNQRQSPQN…NNGQKRRRAA (212 aa)) is activatory. Polar residues-rich tracts occupy residues 502–541 (FSYP…NQYS) and 629–641 (FANT…SEQP). Positions 650–669 (EELRNSRLHEPDRSFEEKNN) are enriched in basic and acidic residues.

It belongs to the HSF family. As to quaternary structure, homotrimer. Homotrimerization increases the affinity of HSF1 to DNA. Post-translationally, exhibits temperature-dependent phosphorylation.

It is found in the nucleus. Functionally, DNA-binding transcription factor that specifically binds heat shock promoter elements (HSE) and activates transcription. The sequence is that of Heat shock transcription factor from Kluyveromyces lactis (strain ATCC 8585 / CBS 2359 / DSM 70799 / NBRC 1267 / NRRL Y-1140 / WM37) (Yeast).